Here is a 600-residue protein sequence, read N- to C-terminus: UvrABC system protein C (600 aa).

Residues 15–92 (EKAGCYLMKD…IKKYQPYYNV (78 aa)) enclose the GIY-YIG domain. Positions 197–232 (QEVKKDLTNKMLQASADLEFERAGELRDQLKYIEET) constitute a UVR domain.

This sequence belongs to the UvrC family. Interacts with UvrB in an incision complex.

The protein resides in the cytoplasm. In terms of biological role, the UvrABC repair system catalyzes the recognition and processing of DNA lesions. UvrC both incises the 5' and 3' sides of the lesion. The N-terminal half is responsible for the 3' incision and the C-terminal half is responsible for the 5' incision. This Lactobacillus delbrueckii subsp. bulgaricus (strain ATCC BAA-365 / Lb-18) protein is UvrABC system protein C.